The primary structure comprises 442 residues: tRNA modification GTPase MnmE (442 aa).

Residues Arg24, Glu82, and Lys122 each contribute to the (6S)-5-formyl-5,6,7,8-tetrahydrofolate site. A TrmE-type G domain is found at 219 to 366; that stretch reads GFKVALVGEP…LRRALKREIE (148 aa). Asn229 lines the K(+) pocket. GTP contacts are provided by residues 229–234, 248–254, and 273–276; these read NAGKST, TDIAGTT, and DTAG. Residue Ser233 coordinates Mg(2+). K(+)-binding residues include Thr248, Ile250, and Thr253. Thr254 contributes to the Mg(2+) binding site. (6S)-5-formyl-5,6,7,8-tetrahydrofolate is bound at residue Lys442.

Belongs to the TRAFAC class TrmE-Era-EngA-EngB-Septin-like GTPase superfamily. TrmE GTPase family. As to quaternary structure, homodimer. Heterotetramer of two MnmE and two MnmG subunits. K(+) is required as a cofactor.

It is found in the cytoplasm. Functionally, exhibits a very high intrinsic GTPase hydrolysis rate. Involved in the addition of a carboxymethylaminomethyl (cmnm) group at the wobble position (U34) of certain tRNAs, forming tRNA-cmnm(5)s(2)U34. The protein is tRNA modification GTPase MnmE of Agrobacterium fabrum (strain C58 / ATCC 33970) (Agrobacterium tumefaciens (strain C58)).